Consider the following 259-residue polypeptide: uncharacterized protein (259 aa).

A coiled-coil region spans residues Val158–Glu187. Positions Thr172–Gln181 are enriched in basic and acidic residues. Disordered regions lie at residues Thr172–Ser197 and Pro217–Lys240. Low complexity-rich tracts occupy residues Asn182–Glu193 and Pro217–Lys226.

This is an uncharacterized protein from Acanthamoeba polyphaga mimivirus (APMV).